The sequence spans 461 residues: MNEIKEKIPRIGMVSLGCPKALTDSELILTRLSAEGYQTSKTFEGADLVIVNTCGFIDDAVRESLDTIGEALAANGKVIVTGCLGAKSGDNGSNLVRQMHPSVLAVTGPHATQEVMDAVHLNLPKPHDPFVDLVPNAFGIAGIKLTPRHYAYLKISEGCNHRCTFCIIPSMRGDLVSRPVGDVLSEARALFEGGVKELLVISQDTSAYGVDVKYRTGFWDGKPVKTRMLELVQALGEIAAPFGAWVRLHYVYPYPSVDEILPLMATGKVLPYLDVPLQHSHPDVLRRMKRPASGEKNLERISRWREMCPEIVIRSTFIAGFPGETEAEFEHLLDFMREAKIDRAGCFAYSAVQGATANDIPGMLPLGVREERRARFMAVAEAVSSQKLQQRVGATMQVLVDHAPALGRKGGTGRSYADAPEIDGVVKLLPPEKISKTMKVGEFTRARIVGVQGHDLIAVPV.

Residues 9-124 (PRIGMVSLGC…VMDAVHLNLP (116 aa)) form the MTTase N-terminal domain. The [4Fe-4S] cluster site is built by Cys18, Cys54, Cys83, Cys159, Cys163, and Cys166. The region spanning 145 to 387 (LTPRHYAYLK…AVAEAVSSQK (243 aa)) is the Radical SAM core domain. A TRAM domain is found at 389 to 461 (QQRVGATMQV…QGHDLIAVPV (73 aa)).

This sequence belongs to the methylthiotransferase family. RimO subfamily. [4Fe-4S] cluster is required as a cofactor.

The protein localises to the cytoplasm. The enzyme catalyses L-aspartate(89)-[ribosomal protein uS12]-hydrogen + (sulfur carrier)-SH + AH2 + 2 S-adenosyl-L-methionine = 3-methylsulfanyl-L-aspartate(89)-[ribosomal protein uS12]-hydrogen + (sulfur carrier)-H + 5'-deoxyadenosine + L-methionine + A + S-adenosyl-L-homocysteine + 2 H(+). Catalyzes the methylthiolation of an aspartic acid residue of ribosomal protein uS12. The polypeptide is Ribosomal protein uS12 methylthiotransferase RimO (Polaromonas naphthalenivorans (strain CJ2)).